Reading from the N-terminus, the 341-residue chain is Arfaptin-2 (341 aa).

The tract at residues 46-84 is disordered; sequence NETSIVSGGYGGSGDGLIPTGSGRHPSHSTSPSGPGDEV. The span at 65 to 81 shows a compositional bias: low complexity; it reads TGSGRHPSHSTSPSGPG. Residue Ser72 is modified to Phosphoserine. Positions 121–321 constitute an AH domain; the sequence is TVDLELELQI…NQKQLEQTLQ (201 aa).

In terms of assembly, forms homodimers or heterodimers with ARFIP1. Interacts with RAC1. Specifically binds to GTP-bound ARF1 and ARF6, but binds to RAC1.GTP and RAC1.GDP with similar affinities. Interacts with ARL1. Interacts (via N-terminus) with IKBKB and IKBKG; these interactions inhibit activation of NF-kappa-B.

Its subcellular location is the golgi apparatus. The protein localises to the trans-Golgi network membrane. Plays a role in constitutive metalloproteinase (MMP) secretion from the trans Golgi network. May have important functions during vesicle biogenesis at certain cargo subdomains, which could be predominantly utilized by secreted MMPs, such as MMP7 and MMP2. Also involved in autophagy by regulating the starvation-dependent trafficking of ATG9A vesicles which deliver the phosphatidylinositol 4-kinase beta (PI4KB) to the autophagosome initiation site. Involved in phagophore growth during mitophagy by regulating ATG9A trafficking to mitochondria. In addition, plays a role in NF-kappa-B inhibition by interacting with IKBKB and IKBKG. This Mus musculus (Mouse) protein is Arfaptin-2.